The sequence spans 283 residues: GTPase Era (283 aa).

An Era-type G domain is found at 7–175 (YCGHVIIVGK…KNIIKSYLPE (169 aa)). Residues 15 to 22 (GKANVGKS) form a G1 region. GTP is bound at residue 15 to 22 (GKANVGKS). The G2 stretch occupies residues 41–45 (NTTQS). Residues 62-65 (DTPG) are G3. GTP contacts are provided by residues 62 to 66 (DTPGV) and 124 to 127 (NKID). The segment at 124 to 127 (NKID) is G4. The G5 stretch occupies residues 154–156 (ISA). Residues 198–283 (IREQLILFLG…HLVLWVKDKN (86 aa)) form the KH type-2 domain.

It belongs to the TRAFAC class TrmE-Era-EngA-EngB-Septin-like GTPase superfamily. Era GTPase family. Monomer.

The protein resides in the cytoplasm. Its subcellular location is the cell membrane. An essential GTPase that binds both GDP and GTP, with rapid nucleotide exchange. Plays a role in 16S rRNA processing and 30S ribosomal subunit biogenesis and possibly also in cell cycle regulation and energy metabolism. In Buchnera aphidicola subsp. Acyrthosiphon pisum (strain APS) (Acyrthosiphon pisum symbiotic bacterium), this protein is GTPase Era.